We begin with the raw amino-acid sequence, 683 residues long: THO complex subunit 5 homolog (683 aa).

The tract at residues 1-42 is disordered; sequence MSSESSKKRKPKVIRSDGTPTEGKRNRSDTEQEGKYYSEEAE. Ser2 carries the N-acetylserine modification. Positions 2–144 are interaction with CSF1R; it reads SSESSKKRKP…YEVMHLQKEI (143 aa). Residues 2–199 are interaction with THOC7; that stretch reads SSESSKKRKP…RLDWELEQRK (198 aa). A phosphoserine mark is found at Ser5 and Ser6. Positions 7-10 match the Nuclear localization signal motif; that stretch reads KKRK. Residues 22–42 are compositionally biased toward basic and acidic residues; sequence EGKRNRSDTEQEGKYYSEEAE. The stretch at 81 to 247 forms a coiled coil; the sequence is AIEIEERRIQ…QASLPVQEYL (167 aa). A Glycyl lysine isopeptide (Lys-Gly) (interchain with G-Cter in SUMO2) cross-link involves residue Lys153. Tyr225 carries the phosphotyrosine modification. The segment at 247–683 is tandem RWD domains; the sequence is LFMPFDQAHK…NHPQGFFSHR (437 aa). Residues 301–336 form a disordered region; the sequence is FKPPEDSQDDESDSDAEEEQTTKRRRPTLGVQLDDK. The segment covering 306–319 has biased composition (acidic residues); it reads DSQDDESDSDAEEE. Residues Ser307, Ser312, and Ser314 each carry the phosphoserine modification. Thr328 carries the phosphothreonine modification.

It belongs to the THOC5 family. As to quaternary structure, component of the THO subcomplex, which is composed of THOC1, THOC2, THOC3, THOC5, THOC6 and THOC7. The THO subcomplex interacts with DDX39B to form the THO-DDX39B complex which multimerizes into a 28-subunit tetrameric assembly. Component of the transcription/export (TREX) complex at least composed of ALYREF/THOC4, DDX39B, SARNP/CIP29, CHTOP and the THO subcomplex; in the complex interacts with THOC1, THOC2, THOC5, THOC6 and THOC7; forms a coiled-coil dimer with THOC7; together with THOC6 and THOC7, plays a key structural role in the oligomerization of the THO-DDX39B complex. TREX seems to have a dynamic structure involving ATP-dependent remodeling. Interacts (via N-terminus) with the NTF2 domain of NXF1. Interacts with phosphorylated CSF1R. Forms a complex with CEBPB. Interacts with CPSF6; indicative for an association with the cleavage factor Im (CFIm) complex. Interacts with THOC1. Interacts with LUZP4. Interacts with NCBP3. Post-translationally, phosphorylated on tyrosine upon binding to activated CSF1R; which causes a dissociation of the two proteins. Phosphorylation on Ser-5 and/or Ser-6 is required for nuclear export. Phosphorylated on Thr-328 in insulin-stimulated adipocytes. In terms of tissue distribution, ubiquitously expressed, with highest levels in testis, liver and heart.

Its subcellular location is the nucleus. It is found in the cytoplasm. Functionally, component of the THO subcomplex of the TREX complex which is thought to couple mRNA transcription, processing and nuclear export, and which specifically associates with spliced mRNA and not with unspliced pre-mRNA. Plays a key structural role in the oligomerization of the THO-DDX39B complex. TREX is recruited to spliced mRNAs by a transcription-independent mechanism, binds to mRNA upstream of the exon-junction complex (EJC) and is recruited in a splicing- and cap-dependent manner to a region near the 5' end of the mRNA where it functions in mRNA export to the cytoplasm via the TAP/NXF1 pathway. THOC5 in conjunction with ALYREF/THOC4 functions in NXF1-NXT1 mediated nuclear export of HSP70 mRNA; both proteins enhance the RNA binding activity of NXF1 and are required for NXF1 localization to the nuclear rim. Involved in transcription elongation and genome stability. Involved in alternative polyadenylation site choice by recruiting CPSF6 to 5' region of target genes; probably mediates association of the TREX and CFIm complexes. Regulates the expression of myeloid transcription factors CEBPA, CEBPB and GAB2 by enhancing the levels of phosphatidylinositol 3,4,5-trisphosphate. May be involved in the differentiation of granulocytes and adipocytes. Essential for hematopoietic primitive cell survival and plays an integral role in monocytic development. The polypeptide is THO complex subunit 5 homolog (Thoc5) (Mus musculus (Mouse)).